The following is a 304-amino-acid chain: tRNA U34 carboxymethyltransferase (304 aa).

Carboxy-S-adenosyl-L-methionine contacts are provided by residues K73, W87, K92, G111, 133–135 (DPS), 160–161 (VE), Y180, and R295.

Belongs to the class I-like SAM-binding methyltransferase superfamily. CmoB family. As to quaternary structure, homotetramer.

The catalysed reaction is carboxy-S-adenosyl-L-methionine + 5-hydroxyuridine(34) in tRNA = 5-carboxymethoxyuridine(34) in tRNA + S-adenosyl-L-homocysteine + H(+). Its function is as follows. Catalyzes carboxymethyl transfer from carboxy-S-adenosyl-L-methionine (Cx-SAM) to 5-hydroxyuridine (ho5U) to form 5-carboxymethoxyuridine (cmo5U) at position 34 in tRNAs. This Aliarcobacter butzleri (strain RM4018) (Arcobacter butzleri) protein is tRNA U34 carboxymethyltransferase.